A 141-amino-acid chain; its full sequence is Hemoglobin subunit zeta (141 aa).

Ser-1 carries the N-acetylserine modification. In terms of domain architecture, Globin spans Ser-1–Arg-141. Thr-28 carries the phosphothreonine modification. Phosphoserine is present on Ser-52. His-58 contributes to the heme b binding site. A Phosphoserine modification is found at Ser-72. Heme b is bound at residue His-87.

Belongs to the globin family. In terms of assembly, heterotetramer of two zeta chains and two epsilon chains.

Functionally, the zeta chain is an alpha-type chain of mammalian embryonic hemoglobin. This Sus scrofa (Pig) protein is Hemoglobin subunit zeta.